A 411-amino-acid chain; its full sequence is tRNA (uracil(54)-C(5))-methyltransferase (411 aa).

The [4Fe-4S] cluster site is built by Cys62, Cys68, Cys71, and Cys138. S-adenosyl-L-methionine-binding positions include Gln254, Tyr280, Thr285, 301–302 (DS), Asp328, and Asp342. Cys369 functions as the Nucleophile in the catalytic mechanism. Glu402 functions as the Proton acceptor in the catalytic mechanism.

The protein belongs to the class I-like SAM-binding methyltransferase superfamily. RNA M5U methyltransferase family.

The enzyme catalyses uridine(54) in tRNA + S-adenosyl-L-methionine = 5-methyluridine(54) in tRNA + S-adenosyl-L-homocysteine + H(+). Functionally, catalyzes the formation of 5-methyl-uridine at position 54 (m5U54) in tRNA. The protein is tRNA (uracil(54)-C(5))-methyltransferase of Pyrococcus furiosus (strain ATCC 43587 / DSM 3638 / JCM 8422 / Vc1).